Here is a 478-residue protein sequence, read N- to C-terminus: Light-independent protochlorophyllide reductase subunit N (478 aa).

Positions 22, 47, and 107 each coordinate [4Fe-4S] cluster.

This sequence belongs to the BchN/ChlN family. As to quaternary structure, protochlorophyllide reductase is composed of three subunits; ChlL, ChlN and ChlB. Forms a heterotetramer of two ChlB and two ChlN subunits. [4Fe-4S] cluster is required as a cofactor.

The protein localises to the plastid. Its subcellular location is the chloroplast. The catalysed reaction is chlorophyllide a + oxidized 2[4Fe-4S]-[ferredoxin] + 2 ADP + 2 phosphate = protochlorophyllide a + reduced 2[4Fe-4S]-[ferredoxin] + 2 ATP + 2 H2O. It functions in the pathway porphyrin-containing compound metabolism; chlorophyll biosynthesis (light-independent). Component of the dark-operative protochlorophyllide reductase (DPOR) that uses Mg-ATP and reduced ferredoxin to reduce ring D of protochlorophyllide (Pchlide) to form chlorophyllide a (Chlide). This reaction is light-independent. The NB-protein (ChlN-ChlB) is the catalytic component of the complex. The polypeptide is Light-independent protochlorophyllide reductase subunit N (Chlorokybus atmophyticus (Soil alga)).